Reading from the N-terminus, the 161-residue chain is Peptidyl-prolyl cis-trans isomerase 10 (161 aa).

Residues Met-1–Ile-153 enclose the PPIase cyclophilin-type domain.

This sequence belongs to the cyclophilin-type PPIase family. PPIL3 subfamily.

The enzyme catalyses [protein]-peptidylproline (omega=180) = [protein]-peptidylproline (omega=0). Functionally, PPIases accelerate the folding of proteins. It catalyzes the cis-trans isomerization of proline imidic peptide bonds in oligopeptides. The polypeptide is Peptidyl-prolyl cis-trans isomerase 10 (cyn-10) (Caenorhabditis elegans).